Reading from the N-terminus, the 330-residue chain is Probable cytosolic iron-sulfur protein assembly protein ciao1-A (330 aa).

WD repeat units lie at residues His-14 to Lys-53, Gly-59 to Leu-98, Gly-103 to Cys-142, Ser-148 to Arg-187, Gly-192 to Asp-231, Phe-243 to Gln-282, and Ala-294 to Val-330.

The protein belongs to the WD repeat CIA1 family. Component of the CIA complex.

In terms of biological role, key component of the cytosolic iron-sulfur protein assembly (CIA) complex, a multiprotein complex that mediates the incorporation of iron-sulfur cluster into extramitochondrial Fe/S proteins. The sequence is that of Probable cytosolic iron-sulfur protein assembly protein ciao1-A (ciao1a) from Salmo salar (Atlantic salmon).